Here is a 1116-residue protein sequence, read N- to C-terminus: cGMP-specific 3',5'-cyclic phosphodiesterase (1116 aa).

Disordered regions lie at residues 1–36 (MTDV…NGAA) and 82–136 (KSEC…ATQQ). A compositionally biased stretch (low complexity) spans 15–28 (VSSTSSEVAVETTS). Residues 86–136 (HSQSNNNQHVETAPSKQSSDSEASAPTTVSIPSANAKINSSSSGKTTATQQ) show a composition bias toward polar residues. 2 GAF domains span residues 241 to 393 (DIDV…GIGI) and 425 to 611 (NLEC…GLGI). Residues 641 to 964 (SQDQTEKLAQ…RNWQDLAEKV (324 aa)) form the PDEase domain. H717 (proton donor) is an active-site residue. H721, H757, D758, and D868 together coordinate a divalent metal cation. 2 disordered regions span residues 1005–1031 (QHGG…LSIK) and 1067–1116 (HVSE…CALL). Composition is skewed to basic and acidic residues over residues 1014–1023 (EDTHTPEHQR) and 1067–1076 (HVSEDMDDKS). The segment covering 1085–1103 (SGSVGRMSASSSTSSAGTV) has biased composition (low complexity). Over residues 1106 to 1116 (SKKRSKLCALL) the composition is skewed to basic residues. Position 1113 is a cysteine methyl ester (C1113). C1113 carries S-farnesyl cysteine lipidation. Positions 1114-1116 (ALL) are cleaved as a propeptide — removed in mature form.

The protein belongs to the cyclic nucleotide phosphodiesterase family. Interacts with PrBP. A divalent metal cation is required as a cofactor.

Its subcellular location is the cell membrane. It carries out the reaction 3',5'-cyclic GMP + H2O = GMP + H(+). In terms of biological role, has a role regulating cGMP transport in Malpighian tubule principal cells. In Drosophila mojavensis (Fruit fly), this protein is cGMP-specific 3',5'-cyclic phosphodiesterase.